Consider the following 894-residue polypeptide: Mitogen-activated protein kinase kinase kinase kinase 3 (894 aa).

N-acetylmethionine is present on Met1. In terms of domain architecture, Protein kinase spans Phe16–Val273. ATP contacts are provided by residues Ile22–Val30, Lys45, and Lys48. Asp136 acts as the Proton acceptor in catalysis. Phosphoserine is present on residues Ser329 and Ser398. The interval Ala410–Leu536 is disordered. A compositionally biased stretch (pro residues) spans Gln473–Lys487. Over residues Asn513–Pro529 the composition is skewed to basic and acidic residues. The 312-residue stretch at Pro556–Val867 folds into the CNH domain.

The protein belongs to the protein kinase superfamily. STE Ser/Thr protein kinase family. STE20 subfamily. As to quaternary structure, interacts with SH3GL2. Interaction appears to regulate MAP4K3-mediated JNK activation. Requires Mg(2+) as cofactor. As to expression, ubiquitously expressed in all tissues examined, with high levels in heart, brain, placenta, skeletal muscle, kidney and pancreas and lower levels in lung and liver.

It catalyses the reaction L-seryl-[protein] + ATP = O-phospho-L-seryl-[protein] + ADP + H(+). The enzyme catalyses L-threonyl-[protein] + ATP = O-phospho-L-threonyl-[protein] + ADP + H(+). In terms of biological role, serine/threonine kinase that plays a role in the response to environmental stress. Appears to act upstream of the JUN N-terminal pathway. Activator of the Hippo signaling pathway which plays a pivotal role in organ size control and tumor suppression by restricting proliferation and promoting apoptosis. MAP4Ks act in parallel to and are partially redundant with STK3/MST2 and STK4/MST2 in the phosphorylation and activation of LATS1/2, and establish MAP4Ks as components of the expanded Hippo pathway. The protein is Mitogen-activated protein kinase kinase kinase kinase 3 of Homo sapiens (Human).